We begin with the raw amino-acid sequence, 109 residues long: Mitochondrial import receptor subunit TOM22 homolog (109 aa).

Topologically, residues 1 to 60 (MALVRDDFDDIPDSEIHETIVERIEGLGEMFPDALRSAVHSTVDWSIWGVKGVFSLTKST) are cytoplasmic. Residues 61-77 (IWVVSTTSLIAFLPYII) traverse the membrane as a helical segment. Over 78 to 109 (EKERSDLEKTQVAQQRQMLLGPSAAIQQAKTA) the chain is Mitochondrial intermembrane.

The protein belongs to the Tom22 family. As to quaternary structure, forms part of the preprotein translocase complex of the outer mitochondrial membrane (TOM complex).

Its subcellular location is the mitochondrion outer membrane. In terms of biological role, central receptor component of the translocase of the outer membrane of mitochondria (TOM complex) responsible for the recognition and translocation of cytosolically synthesized mitochondrial preproteins. Together with the peripheral receptor tomm-20 functions as the transit peptide receptor and facilitates the movement of preproteins into the translocation pore. The chain is Mitochondrial import receptor subunit TOM22 homolog from Caenorhabditis elegans.